Consider the following 283-residue polypeptide: ATP phosphoribosyltransferase (283 aa).

Belongs to the ATP phosphoribosyltransferase family. Long subfamily. It depends on Mg(2+) as a cofactor.

It localises to the cytoplasm. The enzyme catalyses 1-(5-phospho-beta-D-ribosyl)-ATP + diphosphate = 5-phospho-alpha-D-ribose 1-diphosphate + ATP. It functions in the pathway amino-acid biosynthesis; L-histidine biosynthesis; L-histidine from 5-phospho-alpha-D-ribose 1-diphosphate: step 1/9. Feedback inhibited by histidine. Its function is as follows. Catalyzes the condensation of ATP and 5-phosphoribose 1-diphosphate to form N'-(5'-phosphoribosyl)-ATP (PR-ATP). Has a crucial role in the pathway because the rate of histidine biosynthesis seems to be controlled primarily by regulation of HisG enzymatic activity. In Salinibacter ruber (strain DSM 13855 / M31), this protein is ATP phosphoribosyltransferase.